A 121-amino-acid chain; its full sequence is Large ribosomal subunit protein bL20 (121 aa).

It belongs to the bacterial ribosomal protein bL20 family.

Its function is as follows. Binds directly to 23S ribosomal RNA and is necessary for the in vitro assembly process of the 50S ribosomal subunit. It is not involved in the protein synthesizing functions of that subunit. The polypeptide is Large ribosomal subunit protein bL20 (Ruegeria sp. (strain TM1040) (Silicibacter sp.)).